The sequence spans 134 residues: Protein Turandot E (134 aa).

Residues 1–38 (MSNTRTVHSSTSISKMNSALQISCLLVVLGCLLGSGHC) form the signal peptide.

It belongs to the Turandot family.

It localises to the secreted. Its function is as follows. A humoral factor that may play a role in stress tolerance. This Drosophila melanogaster (Fruit fly) protein is Protein Turandot E.